The sequence spans 487 residues: Chromosomal replication initiator protein DnaA (487 aa).

Residues 1-79 (MEKSKNIWSL…GYNNIVIVFT (79 aa)) form a domain I, interacts with DnaA modulators region. Residues 79–142 (TNQPPKTHSN…EEEPTNFKNP (64 aa)) form a domain II region. The domain III, AAA+ region stretch occupies residues 143-359 (FLKKRYTFEN…AAVTKLKAYI (217 aa)). G187, G189, K190, and T191 together coordinate ATP. A domain IV, binds dsDNA region spans residues 360 to 487 (DLDNIEIDIE…TELMNKIKKN (128 aa)).

This sequence belongs to the DnaA family. As to quaternary structure, oligomerizes as a right-handed, spiral filament on DNA at oriC.

It is found in the cytoplasm. In terms of biological role, plays an essential role in the initiation and regulation of chromosomal replication. ATP-DnaA binds to the origin of replication (oriC) to initiate formation of the DNA replication initiation complex once per cell cycle. Binds the DnaA box (a 9 base pair repeat at the origin) and separates the double-stranded (ds)DNA. Forms a right-handed helical filament on oriC DNA; dsDNA binds to the exterior of the filament while single-stranded (ss)DNA is stabiized in the filament's interior. The ATP-DnaA-oriC complex binds and stabilizes one strand of the AT-rich DNA unwinding element (DUE), permitting loading of DNA polymerase. After initiation quickly degrades to an ADP-DnaA complex that is not apt for DNA replication. Binds acidic phospholipids. The sequence is that of Chromosomal replication initiator protein DnaA from Borreliella burgdorferi (strain ZS7) (Borrelia burgdorferi).